The following is a 273-amino-acid chain: 4-hydroxy-tetrahydrodipicolinate reductase (273 aa).

Residues 10–15, Glu-36, 100–102, and 124–127 each bind NAD(+); these read GAGGRM, GTT, and SGNM. Residue His-157 is the Proton donor/acceptor of the active site. Position 158 (His-158) interacts with (S)-2,3,4,5-tetrahydrodipicolinate. Residue Lys-161 is the Proton donor of the active site. 167–168 provides a ligand contact to (S)-2,3,4,5-tetrahydrodipicolinate; it reads GT.

This sequence belongs to the DapB family.

It localises to the cytoplasm. It catalyses the reaction (S)-2,3,4,5-tetrahydrodipicolinate + NAD(+) + H2O = (2S,4S)-4-hydroxy-2,3,4,5-tetrahydrodipicolinate + NADH + H(+). It carries out the reaction (S)-2,3,4,5-tetrahydrodipicolinate + NADP(+) + H2O = (2S,4S)-4-hydroxy-2,3,4,5-tetrahydrodipicolinate + NADPH + H(+). It participates in amino-acid biosynthesis; L-lysine biosynthesis via DAP pathway; (S)-tetrahydrodipicolinate from L-aspartate: step 4/4. Functionally, catalyzes the conversion of 4-hydroxy-tetrahydrodipicolinate (HTPA) to tetrahydrodipicolinate. This is 4-hydroxy-tetrahydrodipicolinate reductase from Rhodopseudomonas palustris (strain BisA53).